Consider the following 688-residue polypeptide: NADH-ubiquinone oxidoreductase 75 kDa subunit (688 aa).

The 2Fe-2S ferredoxin-type domain maps to 1–85 (MLIRFKINEI…DESIETEIDE (85 aa)). 4 residues coordinate [2Fe-2S] cluster: Cys-38, Cys-49, Cys-52, and Cys-66. One can recognise a 4Fe-4S His(Cys)3-ligated-type domain in the interval 85–124 (EILKAREGVMEFLLINHPLDCPICDQGGECDLQEQTIAYG). His-101, Cys-105, Cys-108, Cys-114, Cys-153, Cys-156, Cys-159, and Cys-204 together coordinate [4Fe-4S] cluster. One can recognise a 4Fe-4S Mo/W bis-MGD-type domain in the interval 223-279 (LKNIKGIDIFDTVLTPINYQVKGGEIFRILPRINDRLNEEWITDKVRFHYESYKIIE).

The protein belongs to the complex I 75 kDa subunit family. Complex I is composed of about 45 different subunits. The cofactor is [2Fe-2S] cluster. It depends on [4Fe-4S] cluster as a cofactor.

It is found in the mitochondrion inner membrane. It carries out the reaction a ubiquinone + NADH + 5 H(+)(in) = a ubiquinol + NAD(+) + 4 H(+)(out). Core subunit of the mitochondrial membrane respiratory chain NADH dehydrogenase (Complex I) that is believed to belong to the minimal assembly required for catalysis. Complex I functions in the transfer of electrons from NADH to the respiratory chain. The immediate electron acceptor for the enzyme is believed to be ubiquinone. This is the largest subunit of complex I and it is a component of the iron-sulfur (IP) fragment of the enzyme. It may form part of the active site crevice where NADH is oxidized. The chain is NADH-ubiquinone oxidoreductase 75 kDa subunit (nad11) from Dictyostelium citrinum (Slime mold).